A 60-amino-acid polypeptide reads, in one-letter code: Bowman-Birk type proteinase inhibitor C1 (60 aa).

Disulfide bonds link cysteine 5–cysteine 21, cysteine 11–cysteine 19, cysteine 28–cysteine 35, and cysteine 32–cysteine 49.

The protein belongs to the Bowman-Birk serine protease inhibitor family. As to expression, expressed in bulb (at protein level).

Serine protease inhibitor. Strongly inhibits trypsin (Ki = 0.22 nM) and very weakly inhibits chymotrypsin (Ki = 1200 nM). Does not inhibit bacterial subtilisin. The sequence is that of Bowman-Birk type proteinase inhibitor C1 from Hyacinthus orientalis (Common hyacinth).